A 158-amino-acid chain; its full sequence is 2-C-methyl-D-erythritol 2,4-cyclodiphosphate synthase (158 aa).

The a divalent metal cation site is built by Asp9 and His11. 4-CDP-2-C-methyl-D-erythritol 2-phosphate is bound by residues 9–11 (DVH) and 35–36 (HS). His43 contacts a divalent metal cation. 4-CDP-2-C-methyl-D-erythritol 2-phosphate contacts are provided by residues 57–59 (DIG), 62–66 (FPDTD), 101–107 (AQAPKMA), 133–136 (TTTE), Phe140, and Arg143.

Belongs to the IspF family. In terms of assembly, homotrimer. A divalent metal cation is required as a cofactor.

It carries out the reaction 4-CDP-2-C-methyl-D-erythritol 2-phosphate = 2-C-methyl-D-erythritol 2,4-cyclic diphosphate + CMP. It participates in isoprenoid biosynthesis; isopentenyl diphosphate biosynthesis via DXP pathway; isopentenyl diphosphate from 1-deoxy-D-xylulose 5-phosphate: step 4/6. Its function is as follows. Involved in the biosynthesis of isopentenyl diphosphate (IPP) and dimethylallyl diphosphate (DMAPP), two major building blocks of isoprenoid compounds. Catalyzes the conversion of 4-diphosphocytidyl-2-C-methyl-D-erythritol 2-phosphate (CDP-ME2P) to 2-C-methyl-D-erythritol 2,4-cyclodiphosphate (ME-CPP) with a corresponding release of cytidine 5-monophosphate (CMP). In Vibrio campbellii (strain ATCC BAA-1116), this protein is 2-C-methyl-D-erythritol 2,4-cyclodiphosphate synthase.